The primary structure comprises 590 residues: Aspartate--tRNA(Asp/Asn) ligase (590 aa).

Position 182 (Glu-182) interacts with L-aspartate. The segment at 206-209 is aspartate; sequence QLFK. Arg-228 is an L-aspartate binding site. Residues 228-230 and Gln-237 contribute to the ATP site; that span reads RDE. Residue His-454 participates in L-aspartate binding. Glu-488 lines the ATP pocket. Arg-495 is a binding site for L-aspartate. 540-543 provides a ligand contact to ATP; the sequence is GLDR.

This sequence belongs to the class-II aminoacyl-tRNA synthetase family. Type 1 subfamily. Homodimer.

It localises to the cytoplasm. The enzyme catalyses tRNA(Asx) + L-aspartate + ATP = L-aspartyl-tRNA(Asx) + AMP + diphosphate. In terms of biological role, aspartyl-tRNA synthetase with relaxed tRNA specificity since it is able to aspartylate not only its cognate tRNA(Asp) but also tRNA(Asn). Reaction proceeds in two steps: L-aspartate is first activated by ATP to form Asp-AMP and then transferred to the acceptor end of tRNA(Asp/Asn). This chain is Aspartate--tRNA(Asp/Asn) ligase, found in Halothermothrix orenii (strain H 168 / OCM 544 / DSM 9562).